The chain runs to 171 residues: UPF0316 protein EAT1b_0871 (171 aa).

The next 3 membrane-spanning stretches (helical) occupy residues 4-24 (ILLI…RTIM), 32-52 (IAGL…GIVF), and 57-77 (TVGM…GGFV).

It belongs to the UPF0316 family.

The protein resides in the cell membrane. This chain is UPF0316 protein EAT1b_0871, found in Exiguobacterium sp. (strain ATCC BAA-1283 / AT1b).